The primary structure comprises 266 residues: tRNA pseudouridine synthase A (266 aa).

The active-site Nucleophile is Asp56. Residue Tyr110 participates in substrate binding.

This sequence belongs to the tRNA pseudouridine synthase TruA family.

The enzyme catalyses uridine(38/39/40) in tRNA = pseudouridine(38/39/40) in tRNA. Functionally, formation of pseudouridine at positions 38, 39 and 40 in the anticodon stem and loop of transfer RNAs. The polypeptide is tRNA pseudouridine synthase A (Halobacterium salinarum (strain ATCC 29341 / DSM 671 / R1)).